A 93-amino-acid chain; its full sequence is Large ribosomal subunit protein uL23 (93 aa).

Belongs to the universal ribosomal protein uL23 family. Part of the 50S ribosomal subunit. Contacts protein L29, and trigger factor when it is bound to the ribosome.

One of the early assembly proteins it binds 23S rRNA. One of the proteins that surrounds the polypeptide exit tunnel on the outside of the ribosome. Forms the main docking site for trigger factor binding to the ribosome. The polypeptide is Large ribosomal subunit protein uL23 (Campylobacter jejuni subsp. jejuni serotype O:6 (strain 81116 / NCTC 11828)).